A 158-amino-acid polypeptide reads, in one-letter code: Protein-export protein SecB (158 aa).

It belongs to the SecB family. Homotetramer, a dimer of dimers. One homotetramer interacts with 1 SecA dimer.

It localises to the cytoplasm. One of the proteins required for the normal export of preproteins out of the cell cytoplasm. It is a molecular chaperone that binds to a subset of precursor proteins, maintaining them in a translocation-competent state. It also specifically binds to its receptor SecA. The polypeptide is Protein-export protein SecB (Rhodopseudomonas palustris (strain BisB5)).